Here is a 340-residue protein sequence, read N- to C-terminus: Nucleoid-associated protein PSPA7_4451 (340 aa).

This sequence belongs to the YejK family.

It is found in the cytoplasm. Its subcellular location is the nucleoid. The chain is Nucleoid-associated protein PSPA7_4451 from Pseudomonas paraeruginosa (strain DSM 24068 / PA7) (Pseudomonas aeruginosa (strain PA7)).